A 728-amino-acid polypeptide reads, in one-letter code: 1,4-alpha-glucan branching enzyme GlgB (728 aa).

Asp-405 serves as the catalytic Nucleophile. Glu-458 functions as the Proton donor in the catalytic mechanism.

This sequence belongs to the glycosyl hydrolase 13 family. GlgB subfamily. As to quaternary structure, monomer.

It catalyses the reaction Transfers a segment of a (1-&gt;4)-alpha-D-glucan chain to a primary hydroxy group in a similar glucan chain.. The protein operates within glycan biosynthesis; glycogen biosynthesis. In terms of biological role, catalyzes the formation of the alpha-1,6-glucosidic linkages in glycogen by scission of a 1,4-alpha-linked oligosaccharide from growing alpha-1,4-glucan chains and the subsequent attachment of the oligosaccharide to the alpha-1,6 position. The sequence is that of 1,4-alpha-glucan branching enzyme GlgB from Salmonella arizonae (strain ATCC BAA-731 / CDC346-86 / RSK2980).